Consider the following 209-residue polypeptide: rRNA N(6)-adenosine-methyltransferase METTL5 (209 aa).

S-adenosyl-L-methionine-binding positions include Gln28, Thr31, Gly59, Cys62, Val64, Asp81, and 108 to 109 (DV).

This sequence belongs to the methyltransferase superfamily. PrmA family. In terms of assembly, heterodimer; heterodimerizes with TRMT112. Ubiquitously expressed in brain.

The protein resides in the nucleus. Its subcellular location is the presynapse. It is found in the postsynapse. It carries out the reaction adenosine(1832) in 18S rRNA + S-adenosyl-L-methionine = N(6)-methyladenosine(1832) in 18S rRNA + S-adenosyl-L-homocysteine + H(+). RRNA N6-adenosine-methyltransferase activity is inhibited by zinc. Its function is as follows. Catalytic subunit of a heterodimer with TRMT112, which specifically methylates the 6th position of adenine in position 1832 of 18S rRNA. N6-methylation of adenine(1832) in 18S rRNA resides in the decoding center of 18S rRNA and is required for translation and embryonic stem cells (ESCs) pluripotency and differentiation. The sequence is that of rRNA N(6)-adenosine-methyltransferase METTL5 from Mus musculus (Mouse).